The sequence spans 289 residues: Shikimate kinase (289 aa).

84–94 (PMASGLSSSSA) contacts ATP.

Belongs to the GHMP kinase family. Archaeal shikimate kinase subfamily.

It is found in the cytoplasm. It catalyses the reaction shikimate + ATP = 3-phosphoshikimate + ADP + H(+). It functions in the pathway metabolic intermediate biosynthesis; chorismate biosynthesis; chorismate from D-erythrose 4-phosphate and phosphoenolpyruvate: step 5/7. The sequence is that of Shikimate kinase from Methanobrevibacter smithii (strain ATCC 35061 / DSM 861 / OCM 144 / PS).